The chain runs to 513 residues: ATP synthase subunit alpha (513 aa).

Residue 169-176 (GDRQTGKT) coordinates ATP.

It belongs to the ATPase alpha/beta chains family. In terms of assembly, F-type ATPases have 2 components, CF(1) - the catalytic core - and CF(0) - the membrane proton channel. CF(1) has five subunits: alpha(3), beta(3), gamma(1), delta(1), epsilon(1). CF(0) has three main subunits: a(1), b(2) and c(9-12). The alpha and beta chains form an alternating ring which encloses part of the gamma chain. CF(1) is attached to CF(0) by a central stalk formed by the gamma and epsilon chains, while a peripheral stalk is formed by the delta and b chains.

Its subcellular location is the cell inner membrane. It catalyses the reaction ATP + H2O + 4 H(+)(in) = ADP + phosphate + 5 H(+)(out). Produces ATP from ADP in the presence of a proton gradient across the membrane. The alpha chain is a regulatory subunit. The chain is ATP synthase subunit alpha from Shigella boydii serotype 18 (strain CDC 3083-94 / BS512).